The chain runs to 252 residues: Large ribosomal subunit protein uL4 (252 aa).

Belongs to the universal ribosomal protein uL4 family. As to quaternary structure, part of the 50S ribosomal subunit.

One of the primary rRNA binding proteins, this protein initially binds near the 5'-end of the 23S rRNA. It is important during the early stages of 50S assembly. It makes multiple contacts with different domains of the 23S rRNA in the assembled 50S subunit and ribosome. In terms of biological role, forms part of the polypeptide exit tunnel. In Archaeoglobus fulgidus (strain ATCC 49558 / DSM 4304 / JCM 9628 / NBRC 100126 / VC-16), this protein is Large ribosomal subunit protein uL4.